A 407-amino-acid polypeptide reads, in one-letter code: Shaggy-related protein kinase iota (407 aa).

Residues 1-19 (MASLPLGPQPHALAPPLQL) are compositionally biased toward low complexity. Residues 1–23 (MASLPLGPQPHALAPPLQLHDGD) form a disordered region. An N-acetylalanine modification is found at A2. Residues 70–354 (YMAERVVGTG…ALEACAHPFF (285 aa)) enclose the Protein kinase domain. ATP is bound by residues 76 to 84 (VGTGSFGIV) and K99. D195 functions as the Proton acceptor in the catalytic mechanism. Phosphotyrosine is present on Y230.

This sequence belongs to the protein kinase superfamily. CMGC Ser/Thr protein kinase family. GSK-3 subfamily. In terms of assembly, binds to KIB1. Interacts with BSK6. Autophosphorylated mainly on threonine and serine residues.

The enzyme catalyses L-seryl-[protein] + ATP = O-phospho-L-seryl-[protein] + ADP + H(+). It catalyses the reaction L-threonyl-[protein] + ATP = O-phospho-L-threonyl-[protein] + ADP + H(+). Phosphorylates BSK1, BSK3, BSK5, BSK6, BSK8 and BSK11 in vitro. May mediate extracellular signals to regulate transcription in differentiating cells. The protein is Shaggy-related protein kinase iota (ASK9) of Arabidopsis thaliana (Mouse-ear cress).